Reading from the N-terminus, the 698-residue chain is Topoisomerase subunit TopoN (698 aa).

An Isoglutamyl lysine isopeptide (Lys-Gln) (interchain with Q-Cter in protein Pup) cross-link involves residue lysine 429. Residues 443-473 (GAKARARAASKAKGLGTNLSLPPKLLPSRES) are disordered. The Toprim domain occupies 479-593 (AELFLCEGDS…AGMVYVTMPP (115 aa)).

Belongs to the type II topoisomerase family. A complex of TopoN and TopoM, possibly a heterotetramer. Requires Mg(2+) as cofactor.

The enzyme catalyses ATP-dependent breakage, passage and rejoining of double-stranded DNA.. Inhibited by quinolone antibiotic ciprofloxacin and coumarin antibiotic novobiocin, but at much higher concentrations than is usual for DNA gyrase/topoisomerase. Catalyzes the relaxation of negatively supercoiled DNA in the presence of ATP or dATP but not other nucleotides. Individual subunits have no activity. Not able to negatively supercoil DNA, it can however introduce positive supercoils in DNA. Relaxes positive supercoils in an ATP-dependent manner. Catenates and decatenates DNA. Generates dsDNA breaks in the presence of the quinolone antibiotic ciprofloxacin, showing it is a topoisomerase. The protein is Topoisomerase subunit TopoN of Mycolicibacterium smegmatis (strain ATCC 700084 / mc(2)155) (Mycobacterium smegmatis).